A 394-amino-acid chain; its full sequence is Elongation factor Tu (394 aa).

The tr-type G domain maps to K10–E204. Residues G19–T26 form a G1 region. G19–T26 contacts GTP. T26 serves as a coordination point for Mg(2+). The segment at G60–N64 is G2. The G3 stretch occupies residues D81–G84. GTP contacts are provided by residues D81–H85 and N136–D139. The tract at residues N136 to D139 is G4. The interval S174 to L176 is G5.

This sequence belongs to the TRAFAC class translation factor GTPase superfamily. Classic translation factor GTPase family. EF-Tu/EF-1A subfamily. In terms of assembly, monomer.

The protein resides in the cytoplasm. The catalysed reaction is GTP + H2O = GDP + phosphate + H(+). Its function is as follows. GTP hydrolase that promotes the GTP-dependent binding of aminoacyl-tRNA to the A-site of ribosomes during protein biosynthesis. The polypeptide is Elongation factor Tu (Shewanella sp. (strain ANA-3)).